We begin with the raw amino-acid sequence, 336 residues long: DNA repair protein RAD51 homolog B (336 aa).

A HhH domain is found at 45 to 74 (TVEAVAYAPKKELLNIKGISEAKAEKILAE). 124–131 (GEFRTGKT) provides a ligand contact to ATP. A Nuclear export signal motif is present at residues 242–257 (LARFLRMLLRLADEFG).

The protein belongs to the RecA family. RAD51 subfamily. Forms linear homooligomers, giving rise to a RAD51 nucleoprotein filament, which is essential for strand-pairing reactions during DNA recombination.

It is found in the nucleus. Its subcellular location is the cytoplasm. The protein resides in the chromosome. Plays an important role in homologous strand exchange, a key step in DNA repair through homologous recombination (HR). Binds to single-stranded DNA in an ATP-dependent manner to form nucleoprotein filaments which are essential for the homology search and strand exchange. Catalyzes the recognition of homology and strand exchange between homologous DNA partners to form a joint molecule between a processed DNA break and the repair template. Recruited to resolve stalled replication forks during replication stress. Also involved in interstrand cross-link repair. The protein is DNA repair protein RAD51 homolog B (rad51-b) of Xenopus laevis (African clawed frog).